The primary structure comprises 85 residues: Large ribosomal subunit protein bL27 (85 aa).

Residues 1–21 (MAHKKGQGSTQNNRDSAGRRL) are disordered.

The protein belongs to the bacterial ribosomal protein bL27 family.

The chain is Large ribosomal subunit protein bL27 from Nitratiruptor sp. (strain SB155-2).